The sequence spans 420 residues: Glutamyl-tRNA reductase (420 aa).

Residues Thr-49–Arg-52, Ser-107, Glu-112–Gln-114, and Gln-118 each bind substrate. The active-site Nucleophile is the Cys-50. Position 187-192 (Gly-187–Ile-192) interacts with NADP(+).

Belongs to the glutamyl-tRNA reductase family. Homodimer.

It carries out the reaction (S)-4-amino-5-oxopentanoate + tRNA(Glu) + NADP(+) = L-glutamyl-tRNA(Glu) + NADPH + H(+). It participates in porphyrin-containing compound metabolism; protoporphyrin-IX biosynthesis; 5-aminolevulinate from L-glutamyl-tRNA(Glu): step 1/2. In terms of biological role, catalyzes the NADPH-dependent reduction of glutamyl-tRNA(Glu) to glutamate 1-semialdehyde (GSA). The chain is Glutamyl-tRNA reductase from Methylococcus capsulatus (strain ATCC 33009 / NCIMB 11132 / Bath).